Here is a 396-residue protein sequence, read N- to C-terminus: MACAGLLTVCLLRPPAPQPQPQTPRHPQLAPDPGPAGHTLFQDVFRRADKNDDGKLSFEEFQNYFADGVLSLGELQELFSGIDGHLTDNLETEKLCDYFSEHLGVYRPVLAALESLNRAVLAAMDATKLEYERASKVDQFVTRFLLRETVSQLQALQSSLEGASDTLEAQAHGWRSDAESVEAQSRLCGSRRAGRRALRSVSRSSTWSPGSSDTGRSSEAEMQWRLQVNRLQELIDQLECKVRAVGPGPHKGGPSWYPPEPGPCWRPGPHSVPSQAPRLEPLREEDLAKGPDLHILMAQRQVQVAEEGLQDFHRALRCYVDFTGAQSHCLHVSAQKMLDGASFTLYEFWQDEASWRRHQQSPGSKAFQRILIDHLRAPDTLTTVFFPASWWIMNNN.

Pro residues predominate over residues 14–34 (PPAPQPQPQTPRHPQLAPDPG). A disordered region spans residues 14–36 (PPAPQPQPQTPRHPQLAPDPGPA). The region spanning 36-71 (AGHTLFQDVFRRADKNDDGKLSFEEFQNYFADGVLS) is the EF-hand domain. Residues aspartate 49, asparagine 51, aspartate 53, lysine 55, and glutamate 60 each coordinate Ca(2+). The interval 181 to 190 (VEAQSRLCGS) is required for interaction with APBA3. The interval 197–220 (ALRSVSRSSTWSPGSSDTGRSSEA) is disordered. Positions 206–217 (TWSPGSSDTGRS) are enriched in polar residues. Residues 296–385 (LMAQRQVQVA…RAPDTLTTVF (90 aa)) enclose the ABM domain.

As to quaternary structure, interacts with the N-terminal domain of APBA2. Interacts with NEK2. Interacts with APBA3; APBA3 seems to mediate the interaction between NECAB3 and HIF1AN. In terms of processing, phosphorylated by NEK2. In terms of tissue distribution, strongly expressed in heart and skeletal muscle, moderately in brain and pancreas.

Its subcellular location is the golgi apparatus. Inhibits the interaction of APBA2 with amyloid-beta precursor protein (APP), and hence allows formation of amyloid-beta. May enhance the activity of HIF1A and thus promote glycolysis under normoxic conditions; the function requires its ABM domain and may implicate the stabilization of the interaction between HIF1AN and APBA3. This chain is N-terminal EF-hand calcium-binding protein 3 (NECAB3), found in Homo sapiens (Human).